The chain runs to 465 residues: MVNEHNVTLSNLIDFGLIKPNQEVKYSYRGVSYTGVILLNGEIHTNGVSFTNPTHWTRTISGNNCSGWGTVKLSGASGPPLLKLKREYLFRVGSTGKNKKKTQKQQQPQQPQPQPQPQQQQQQQQQQQQQQQQQQQPNNNDNDSESEIYKKSDTSETSDQDIDNDDDDAGGQSNNRTTTTTTTTTTTTTTNRQNSPQKKIPSTAITNPKEKKKEKKENILTKKKQQSLQYQQQLQLLQRQNSPPSVSPSSSTSTSSSTSSPASNQIFNSFGPNSQNHNQYGINYNSQQHQPQQYNNNNNNNNNNNNNNNNNNNNNNNNNNNNNNNNNNNNNNNNNNNNNNNSNNNNNNNNNNNNNININNNNNINNNNNINNNSNNQPNCCSPNSNCQYYGYNQQNPPKHQYPNNFLTDGHNPSPPIPVLPFTNQSQNQNQNQNQNQNQNQKSKSKSKSKSKFKSKSKSKSKSKS.

One can recognise an RAMA domain in the interval 6–91 (NVTLSNLIDF…LKLKREYLFR (86 aa)). 2 disordered regions span residues 95-377 (TGKN…SNNQ) and 392-465 (YNQQ…KSKS). The span at 117–137 (PQQQQQQQQQQQQQQQQQQQP) shows a compositional bias: low complexity. The span at 156–169 (ETSDQDIDNDDDDA) shows a compositional bias: acidic residues. The span at 177-190 (TTTTTTTTTTTTTT) shows a compositional bias: low complexity. A compositionally biased stretch (basic and acidic residues) spans 208 to 220 (PKEKKKEKKENIL). The stretch at 214-242 (EKKENILTKKKQQSLQYQQQLQLLQRQNS) forms a coiled coil. Positions 226-263 (QSLQYQQQLQLLQRQNSPPSVSPSSSTSTSSSTSSPAS) are enriched in low complexity. The span at 264–294 (NQIFNSFGPNSQNHNQYGINYNSQQHQPQQY) shows a compositional bias: polar residues. Positions 295-376 (NNNNNNNNNN…NNNINNNSNN (82 aa)) are enriched in low complexity. The segment covering 392–407 (YNQQNPPKHQYPNNFL) has biased composition (polar residues). The segment covering 424 to 442 (NQSQNQNQNQNQNQNQNQK) has biased composition (low complexity). Residues 443-465 (SKSKSKSKSKFKSKSKSKSKSKS) show a composition bias toward basic residues.

This is an uncharacterized protein from Dictyostelium discoideum (Social amoeba).